Here is a 458-residue protein sequence, read N- to C-terminus: Probable M18 family aminopeptidase 1 (458 aa).

Positions 95, 170, and 434 each coordinate Zn(2+).

This sequence belongs to the peptidase M18 family. It depends on Zn(2+) as a cofactor.

This Borreliella afzelii (strain PKo) (Borrelia afzelii) protein is Probable M18 family aminopeptidase 1.